We begin with the raw amino-acid sequence, 391 residues long: Polysialic acid biosynthesis protein P7 (391 aa).

In terms of biological role, may be involved in the synthesis of polysialic acid (PSA). The polypeptide is Polysialic acid biosynthesis protein P7 (neuC) (Escherichia coli).